Consider the following 230-residue polypeptide: Ribonuclease 3 (230 aa).

The 128-residue stretch at 8 to 135 (IVELKEKLGI…LIGAVYLQTN (128 aa)) folds into the RNase III domain. Residue glutamate 48 participates in Mg(2+) binding. Residue aspartate 52 is part of the active site. Residues aspartate 121 and glutamate 124 each contribute to the Mg(2+) site. Residue glutamate 124 is part of the active site. Positions 161–230 (DYKTMIQELV…AHFAFQKLSK (70 aa)) constitute a DRBM domain.

It belongs to the ribonuclease III family. In terms of assembly, homodimer. It depends on Mg(2+) as a cofactor.

Its subcellular location is the cytoplasm. It catalyses the reaction Endonucleolytic cleavage to 5'-phosphomonoester.. In terms of biological role, digests double-stranded RNA. Involved in the processing of primary rRNA transcript to yield the immediate precursors to the large and small rRNAs (23S and 16S). Processes some mRNAs, and tRNAs when they are encoded in the rRNA operon. Processes pre-crRNA and tracrRNA of type II CRISPR loci if present in the organism. This chain is Ribonuclease 3, found in Natranaerobius thermophilus (strain ATCC BAA-1301 / DSM 18059 / JW/NM-WN-LF).